The chain runs to 30 residues: Matrix Gla protein (30 aa).

Ser-2, Ser-3, and Ser-5 each carry phosphoserine.

It belongs to the osteocalcin/matrix Gla protein family. In terms of processing, requires vitamin K-dependent gamma-carboxylation for its function.

The protein localises to the secreted. In terms of biological role, associates with the organic matrix of calcified cartilage. The chain is Matrix Gla protein (mgp) from Prionace glauca (Blue shark).